A 74-amino-acid chain; its full sequence is NAD(P)H-quinone oxidoreductase subunit O (74 aa).

The protein belongs to the complex I NdhO subunit family. As to quaternary structure, NDH-1 can be composed of about 15 different subunits; different subcomplexes with different compositions have been identified which probably have different functions.

It localises to the cellular thylakoid membrane. It carries out the reaction a plastoquinone + NADH + (n+1) H(+)(in) = a plastoquinol + NAD(+) + n H(+)(out). It catalyses the reaction a plastoquinone + NADPH + (n+1) H(+)(in) = a plastoquinol + NADP(+) + n H(+)(out). Its function is as follows. NDH-1 shuttles electrons from an unknown electron donor, via FMN and iron-sulfur (Fe-S) centers, to quinones in the respiratory and/or the photosynthetic chain. The immediate electron acceptor for the enzyme in this species is believed to be plastoquinone. Couples the redox reaction to proton translocation, and thus conserves the redox energy in a proton gradient. Cyanobacterial NDH-1 also plays a role in inorganic carbon-concentration. This chain is NAD(P)H-quinone oxidoreductase subunit O, found in Synechococcus sp. (strain RCC307).